The primary structure comprises 730 residues: ATP-binding cassette sub-family D member 1 (730 aa).

The next 4 membrane-spanning stretches (helical) occupy residues 24–44, 137–157, 169–189, and 276–296; these read AFSY…VTIP, FCLI…GALV, ALVL…NSMI, and ANII…AHIL. In terms of domain architecture, ABC transmembrane type-1 spans 136–373; sequence TFCLISRTFL…WFIMLEQFFM (238 aa). The ABC transporter domain occupies 505 to 727; that stretch reads ISLRAVPVVT…MNSDEEQKGQ (223 aa). 538-545 contributes to the ATP binding site; it reads GPNGCGKS.

Belongs to the ABC transporter superfamily. ABCD family. Peroxisomal fatty acyl CoA transporter (TC 3.A.1.203) subfamily.

It is found in the peroxisome membrane. The catalysed reaction is an acyl-CoA(out) + ATP + H2O = an acyl-CoA(in) + ADP + phosphate + H(+). In terms of biological role, plays a role in the transport of free very-long-chain fatty acids (VLCFAs) as well as their CoA-esters across the peroxisomal membrane by acting as an ATP-specific binding subunit releasing ADP after ATP hydrolysis. Thus, plays a role in regulation of VLCFAs and energy metabolism namely, in the degradation and biosynthesis of fatty acids by beta-oxidation, mitochondrial function and microsomal fatty acid elongation. The sequence is that of ATP-binding cassette sub-family D member 1 from Drosophila melanogaster (Fruit fly).